Here is a 176-residue protein sequence, read N- to C-terminus: Ferredoxin-type protein NapF (176 aa).

2 4Fe-4S ferredoxin-type domains span residues 39 to 68 (VENSIFVARCTRCGDCLSVCETNILVKGDA) and 71 to 100 (PEVRFDNGECTFCGKCVDACKQPIFYPRDQ). 16 residues coordinate [4Fe-4S] cluster: C48, C51, C54, C58, C80, C83, C86, C90, C113, C121, C124, C128, C152, C155, C158, and C162. 2 4Fe-4S ferredoxin-type domains span residues 119–138 (IECRTCQDNCPANAIRFKLQ) and 143–172 (AQPLVNFDACNGCGACVQGCPVNAITMNDL).

The protein belongs to the NapF family. As to quaternary structure, interacts with the cytoplasmic NapA precursor. [4Fe-4S] cluster serves as cofactor.

It localises to the cytoplasm. Could be involved in the maturation of NapA, the catalytic subunit of the periplasmic nitrate reductase, before its export into the periplasm. The polypeptide is Ferredoxin-type protein NapF (Haemophilus influenzae (strain ATCC 51907 / DSM 11121 / KW20 / Rd)).